We begin with the raw amino-acid sequence, 652 residues long: Acetyl-coenzyme A synthetase (652 aa).

Residues 191–194, Thr311, and Asn335 contribute to the CoA site; that span reads RAGR. ATP is bound by residues 387 to 389, 411 to 416, Asp500, and Arg515; these read GEP and DTWWQT. Ser523 contacts CoA. Arg526 contacts ATP. Mg(2+) is bound by residues Val537, His539, and Ile542. A CoA-binding site is contributed by Arg584. N6-acetyllysine is present on Lys609.

The protein belongs to the ATP-dependent AMP-binding enzyme family. Mg(2+) is required as a cofactor. Acetylated. Deacetylation by the SIR2-homolog deacetylase activates the enzyme.

It catalyses the reaction acetate + ATP + CoA = acetyl-CoA + AMP + diphosphate. Functionally, catalyzes the conversion of acetate into acetyl-CoA (AcCoA), an essential intermediate at the junction of anabolic and catabolic pathways. Acs undergoes a two-step reaction. In the first half reaction, Acs combines acetate with ATP to form acetyl-adenylate (AcAMP) intermediate. In the second half reaction, it can then transfer the acetyl group from AcAMP to the sulfhydryl group of CoA, forming the product AcCoA. Enables the cell to use acetate during aerobic growth to generate energy via the TCA cycle, and biosynthetic compounds via the glyoxylate shunt. Acetylates CheY, the response regulator involved in flagellar movement and chemotaxis. This chain is Acetyl-coenzyme A synthetase, found in Escherichia coli O6:H1 (strain CFT073 / ATCC 700928 / UPEC).